We begin with the raw amino-acid sequence, 223 residues long: Membrane-associated progesterone receptor component 2 (223 aa).

Residues 1-33 (MAAGDGDVKLGTLGSGSESSNDGGSESPGDAGA) form a disordered region. Ser-15 carries O-linked (Xyl...) (chondroitin sulfate) serine glycosylation. Residues 15 to 33 (SGSESSNDGGSESPGDAGA) show a composition bias toward low complexity. Residues 42–66 (AAALALLTGGGEMLLNVALVALVLL) form a helical membrane-spanning segment. Residues Ser-90, Ser-104, and Ser-208 each carry the phosphoserine modification. Residues 102-201 (DFSLEQLRQY…EKYDYVGRLL (100 aa)) form the Cytochrome b5 heme-binding domain. The tract at residues 202 to 223 (KPGEEPSEYTDEEDTKDHNKQD) is disordered. A compositionally biased stretch (acidic residues) spans 206 to 215 (EPSEYTDEED). Position 210 is a phosphotyrosine (Tyr-210). At Thr-211 the chain carries Phosphothreonine.

This sequence belongs to the cytochrome b5 family. MAPR subfamily. As to quaternary structure, interacts with PGRMC1. Interacts with AAAS. Expressed by endometrial glands and stroma (at protein level). Detected in urine (at protein level).

Its subcellular location is the membrane. The protein localises to the nucleus envelope. It localises to the endoplasmic reticulum. It is found in the secreted. In terms of biological role, required for the maintenance of uterine histoarchitecture and normal female reproductive lifespan. May serve as a universal non-classical progesterone receptor in the uterus. Intracellular heme chaperone required for delivery of labile, or signaling heme, to the nucleus. Plays a role in adipocyte function and systemic glucose homeostasis. In brown fat, which has a high demand for heme, delivery of labile heme in the nucleus regulates the activity of heme-responsive transcriptional repressors such as NR1D1 and BACH1. The chain is Membrane-associated progesterone receptor component 2 from Homo sapiens (Human).